The primary structure comprises 318 residues: tRNA-modifying protein YgfZ (318 aa).

Folate-binding residues include Trp28 and Trp182.

This sequence belongs to the tRNA-modifying YgfZ family.

Its subcellular location is the cytoplasm. Its function is as follows. Folate-binding protein involved in regulating the level of ATP-DnaA and in the modification of some tRNAs. It is probably a key factor in regulatory networks that act via tRNA modification, such as initiation of chromosomal replication. The sequence is that of tRNA-modifying protein YgfZ from Aliivibrio fischeri (strain ATCC 700601 / ES114) (Vibrio fischeri).